Consider the following 123-residue polypeptide: Small ribosomal subunit protein uS12 (123 aa).

A disordered region spans residues 1-25 (MPTINQLVRKPRKSRSALNKAPALQ). Asp90 carries the post-translational modification 3-methylthioaspartic acid.

The protein belongs to the universal ribosomal protein uS12 family. Part of the 30S ribosomal subunit. Contacts proteins S8 and S17. May interact with IF1 in the 30S initiation complex.

In terms of biological role, with S4 and S5 plays an important role in translational accuracy. Functionally, interacts with and stabilizes bases of the 16S rRNA that are involved in tRNA selection in the A site and with the mRNA backbone. Located at the interface of the 30S and 50S subunits, it traverses the body of the 30S subunit contacting proteins on the other side and probably holding the rRNA structure together. The combined cluster of proteins S8, S12 and S17 appears to hold together the shoulder and platform of the 30S subunit. This chain is Small ribosomal subunit protein uS12, found in Ehrlichia canis (strain Jake).